The chain runs to 426 residues: Putative F-box protein At4g38870 (426 aa).

Positions 47–92 (SVNSELLPVDLIMEILKKLSLKPLIRFLCVSKLWASIIRDPYFMKL) constitute an F-box domain.

In Arabidopsis thaliana (Mouse-ear cress), this protein is Putative F-box protein At4g38870.